Reading from the N-terminus, the 376-residue chain is Sulfate/thiosulfate import ATP-binding protein CysA (376 aa).

The ABC transporter domain maps to 3–237 (IRLDNISKHF…PNSRFVFDFF (235 aa)). Position 35 to 42 (35 to 42 (GPSGSGKT)) interacts with ATP.

This sequence belongs to the ABC transporter superfamily. Sulfate/tungstate importer (TC 3.A.1.6) family. The complex is composed of two ATP-binding proteins (CysA), two transmembrane proteins (CysT and CysW) and a solute-binding protein (CysP).

It localises to the cell inner membrane. The enzyme catalyses sulfate(out) + ATP + H2O = sulfate(in) + ADP + phosphate + H(+). The catalysed reaction is thiosulfate(out) + ATP + H2O = thiosulfate(in) + ADP + phosphate + H(+). Part of the ABC transporter complex CysAWTP involved in sulfate/thiosulfate import. Responsible for energy coupling to the transport system. This Vibrio cholerae serotype O1 (strain ATCC 39315 / El Tor Inaba N16961) protein is Sulfate/thiosulfate import ATP-binding protein CysA.